Consider the following 1474-residue polypeptide: Alpha-2-macroglobulin (1474 aa).

A signal peptide spans 1–23; sequence MGKNKLLHPSLVLLLLVLLPTDA. C48 and C86 are disulfide-bonded. N55, N70, and N247 each carry an N-linked (GlcNAc...) asparagine glycan. 2 cysteine pairs are disulfide-bonded: C251–C299 and C269–C287. N-linked (GlcNAc...) asparagine glycosylation is found at N396 and N410. Cystine bridges form between C470–C563, C595–C771, C642–C689, C821–C849, C847–C883, C921–C1321, C1079–C1127, and C1352–C1467. The bait region stretch occupies residues 690–728; sequence PQLQQYEMHGPEGLRVGFYESDVMGRGHARLVHAEEPPT. Residues Q693 and Q694 each participate in an isoglutamyl lysine isopeptide (Gln-Lys) (interchain with K-? in other proteins) cross-link. Inhibitory regions lie at residues 704–709, 719–723, and 730–735; these read RVGFYE, RLVHA, and TVRKYF. N869 carries N-linked (GlcNAc...) asparagine glycosylation. Residues 972-975 constitute a cross-link (isoglutamyl cysteine thioester (Cys-Gln)); that stretch reads CGEQ. Residue N991 is glycosylated (N-linked (GlcNAc...) asparagine). Residue N1424 is glycosylated (N-linked (GlcNAc...) asparagine).

The protein belongs to the protease inhibitor I39 (alpha-2-macroglobulin) family. As to quaternary structure, homotetramer; disulfide-linked. As to expression, plasma.

The protein localises to the secreted. In terms of biological role, is able to inhibit all four classes of proteinases by a unique 'trapping' mechanism. This protein has a peptide stretch, called the 'bait region' which contains specific cleavage sites for different proteinases. When a proteinase cleaves the bait region, a conformational change is induced in the protein which traps the proteinase. The entrapped enzyme remains active against low molecular weight substrates (activity against high molecular weight substrates is greatly reduced). Following cleavage in the bait region a thioester bond is hydrolyzed and mediates the covalent binding of the protein to the proteinase. This Pongo abelii (Sumatran orangutan) protein is Alpha-2-macroglobulin (A2M).